A 358-amino-acid chain; its full sequence is UDP-N-acetylglucosamine--N-acetylmuramyl-(pentapeptide) pyrophosphoryl-undecaprenol N-acetylglucosamine transferase (358 aa).

UDP-N-acetyl-alpha-D-glucosamine-binding positions include 12–14 (TAG), arginine 165, serine 195, and glutamine 290.

Belongs to the glycosyltransferase 28 family. MurG subfamily.

The protein localises to the cell membrane. The catalysed reaction is di-trans,octa-cis-undecaprenyl diphospho-N-acetyl-alpha-D-muramoyl-L-alanyl-D-glutamyl-meso-2,6-diaminopimeloyl-D-alanyl-D-alanine + UDP-N-acetyl-alpha-D-glucosamine = di-trans,octa-cis-undecaprenyl diphospho-[N-acetyl-alpha-D-glucosaminyl-(1-&gt;4)]-N-acetyl-alpha-D-muramoyl-L-alanyl-D-glutamyl-meso-2,6-diaminopimeloyl-D-alanyl-D-alanine + UDP + H(+). It participates in cell wall biogenesis; peptidoglycan biosynthesis. Functionally, cell wall formation. Catalyzes the transfer of a GlcNAc subunit on undecaprenyl-pyrophosphoryl-MurNAc-pentapeptide (lipid intermediate I) to form undecaprenyl-pyrophosphoryl-MurNAc-(pentapeptide)GlcNAc (lipid intermediate II). In Clostridium tetani (strain Massachusetts / E88), this protein is UDP-N-acetylglucosamine--N-acetylmuramyl-(pentapeptide) pyrophosphoryl-undecaprenol N-acetylglucosamine transferase.